Here is a 340-residue protein sequence, read N- to C-terminus: Gallate dioxygenase (340 aa).

H45 (proton donor) is an active-site residue. Catalysis depends on H113, which acts as the Proton acceptor.

Belongs to the LigB/MhpB extradiol dioxygenase family. The cofactor is Fe(2+).

The enzyme catalyses 3,4,5-trihydroxybenzoate + O2 = (1E)-4-oxobut-1-ene-1,2,4-tricarboxylate + 2 H(+). In terms of biological role, ring-cleavage dioxygenase that acts specifically on gallate to produce the keto-tautomer of 4-oxalomesaconate. Mediates the first step of gallate degradation pathway. The sequence is that of Gallate dioxygenase (galA) from Pseudomonas putida (strain ATCC 47054 / DSM 6125 / CFBP 8728 / NCIMB 11950 / KT2440).